The following is a 569-amino-acid chain: Phospholipase B-like protein D (569 aa).

The N-terminal stretch at 1–22 (MIIFKNLLKLLIILLTIKLYFC) is a signal peptide. N-linked (GlcNAc...) asparagine glycosylation is found at Asn93, Asn126, Asn181, Asn425, and Asn430.

This sequence belongs to the phospholipase B-like family.

It is found in the secreted. In terms of biological role, probable phospholipase. This chain is Phospholipase B-like protein D (plbD), found in Dictyostelium discoideum (Social amoeba).